The chain runs to 363 residues: NAD-dependent epimerase/dehydratase tndE (363 aa).

A helical membrane pass occupies residues 10-30 (GLVLITGVNGFLASHLALQLI). Position 176 (Tyr-176) interacts with NADP(+).

Belongs to the NAD(P)-dependent epimerase/dehydratase family. Dihydroflavonol-4-reductase subfamily.

Its subcellular location is the membrane. It functions in the pathway secondary metabolite biosynthesis; terpenoid biosynthesis. Functionally, NAD-dependent epimerase/dehydratase; part of the gene cluster that mediates the biosynthesis of talaronoid C, a fusicoccane diterpenoid with an unprecedented tricyclic 5/8/6 ring system. The first step in the pathway is performed by the fusicoccadiene synthase tndC that possesses both prenyl transferase and terpene cyclase activity, converting isopentenyl diphosphate and dimethylallyl diphosphate into geranylgeranyl diphosphate (GGDP) and further converting GGDP into talarodiene, a precursor for talaronoid C. The remaining enzymes from the cluster include the cytochrome P450 monooxygenase tndB, the aldehyde reductase tndE and the alcohol dehydrogenase tndF that are involved in the conversion of talarodiene into talaronoid C. The sequence is that of NAD-dependent epimerase/dehydratase tndE from Aspergillus flavipes.